The sequence spans 229 residues: Synaptogyrin-3 (229 aa).

N-acetylmethionine is present on M1. In terms of domain architecture, MARVEL spans 20-172 (FARRPQTLLR…LTVKALQRFR (153 aa)). Transmembrane regions (helical) follow at residues 30–50 (VASW…GYVN), 70–90 (FGVA…LLDV), 105–125 (VLLD…GFCF), and 148–168 (AVIT…VKAL).

Belongs to the synaptogyrin family. In terms of assembly, interacts (via N-terminus) with SLC6A3 (via N-terminus). May interact with VMAT2.

Its subcellular location is the cytoplasmic vesicle. The protein resides in the secretory vesicle. It localises to the synaptic vesicle membrane. It is found in the synapse. In terms of biological role, may play a role in regulated exocytosis. May indirectly regulate the activity of the plasma membrane dopamine transporter SLC6A3 and thereby regulate dopamine transport back from the synaptic cleft into the presynaptic terminal. This Bos taurus (Bovine) protein is Synaptogyrin-3.